The following is a 909-amino-acid chain: Tubulin polyglutamylase TTLL7 (909 aa).

A TTL domain is found at 40-392; that stretch reads NGAITANVVG…RASDKKKNLA (353 aa). ATP contacts are provided by residues K162, 168-169, 190-193, and 203-205; these read MG, QEYL, and KFD. Residue R229 coordinates L-glutamate. Position 251-252 (251-252) interacts with ATP; sequence TN. Positions 253, 254, and 273 each coordinate L-glutamate. Residues D338, E351, and N353 each coordinate Mg(2+). K369 is an L-glutamate binding site. Positions 390 to 452 are c-MTBD region; the sequence is NLAKQKAEAQ…ISREEYENRH (63 aa). Disordered regions lie at residues 517 to 580 and 603 to 688; these read DEKL…KVSY and KAAR…PSIS. Residues 518 to 531 are compositionally biased toward basic and acidic residues; sequence EKLSGKPTRPKEPR. Over residues 532–542 the composition is skewed to polar residues; that stretch reads TLSSMPESTQT. The span at 548–562 shows a compositional bias: low complexity; it reads NYSSHSSSNSTGSSS. Residues 571–580 show a composition bias toward basic and acidic residues; that stretch reads KEGKEKKVSY. A compositionally biased stretch (low complexity) spans 604-625; the sequence is AARPFSNSSSPSSAASMRRSVS. Residues 626-657 are compositionally biased toward polar residues; it reads CPRSITALNTQSPTTDQRPFSSRISSTITRPL. Positions 658 to 673 are enriched in low complexity; sequence SGNRTNSLNRSSSSNR. Over residues 674 to 688 the composition is skewed to polar residues; that stretch reads VPQSGTSGSVYPSIS.

It belongs to the tubulin--tyrosine ligase family. Interacts with both alpha- and beta-tubulin (via C-terminal tubulin tails). Requires Mg(2+) as cofactor.

It is found in the cell projection. The protein localises to the cilium. Its subcellular location is the cytoplasm. It localises to the cytoskeleton. The protein resides in the cilium basal body. It is found in the dendrite. The protein localises to the perikaryon. The catalysed reaction is L-glutamyl-[protein] + L-glutamate + ATP = gamma-L-glutamyl-L-glutamyl-[protein] + ADP + phosphate + H(+). The enzyme catalyses (L-glutamyl)(n)-gamma-L-glutamyl-L-glutamyl-[protein] + L-glutamate + ATP = (L-glutamyl)(n+1)-gamma-L-glutamyl-L-glutamyl-[protein] + ADP + phosphate + H(+). Its function is as follows. Polyglutamylase which modifies tubulin, generating polyglutamate side chains of variable lengths on the gamma-carboxyl group of specific glutamate residues within the C-terminal tail of tubulin. Mediates both ATP-dependent initiation and elongation steps of the polyglutamylation reaction. Preferentially modifies the beta-tubulin tail over an alpha-tail. Competes with monoglycylase TTLL3 for modification site on beta-tubulin substrate, thereby creating an anticorrelation between glycylation and glutamylation reactions. In Xenopus tropicalis (Western clawed frog), this protein is Tubulin polyglutamylase TTLL7.